The primary structure comprises 467 residues: Transcription factor CRF1 (467 aa).

Residues 1 to 10 (MLLSAPVNST) show a composition bias toward polar residues. 4 disordered regions span residues 1–42 (MLLS…VVLS), 62–110 (DFES…SSKT), 151–170 (SKSESHRQYHSPSASTTNED), and 341–361 (TYRDDESTDEDESLPTPDRKR). A compositionally biased stretch (basic residues) spans 11 to 23 (VRRKPHSPNKKKP). Positions 28–42 (TAASFSSSSSTVVLS) are enriched in low complexity. Basic and acidic residues predominate over residues 89 to 102 (YSREENTNEVEEKT).

Interacts with FHL1 to form a repressor complex. The formation of the CRF1-FHL1 complex is inhibited by the TOR pathway. Phosphorylated by CDC28 and YAK1.

The protein resides in the cytoplasm. Its subcellular location is the nucleus. In terms of biological role, transcription factor, corepressor with FHL1 of ribosomal protein genes. May be involved in the blocking of the spread of silencing. The chain is Transcription factor CRF1 (CRF1) from Saccharomyces cerevisiae (strain ATCC 204508 / S288c) (Baker's yeast).